The primary structure comprises 277 residues: NADPH-dependent 7-cyano-7-deazaguanine reductase (277 aa).

86–88 (IES) is a substrate binding site. Position 88-89 (88-89 (SK)) interacts with NADPH. Cys-185 serves as the catalytic Thioimide intermediate. Asp-192 acts as the Proton donor in catalysis. 224-225 (HE) provides a ligand contact to substrate. 253–254 (RG) lines the NADPH pocket.

This sequence belongs to the GTP cyclohydrolase I family. QueF type 2 subfamily. Homodimer.

It is found in the cytoplasm. It carries out the reaction 7-aminomethyl-7-carbaguanine + 2 NADP(+) = 7-cyano-7-deazaguanine + 2 NADPH + 3 H(+). It participates in tRNA modification; tRNA-queuosine biosynthesis. Its function is as follows. Catalyzes the NADPH-dependent reduction of 7-cyano-7-deazaguanine (preQ0) to 7-aminomethyl-7-deazaguanine (preQ1). This Hydrogenovibrio crunogenus (strain DSM 25203 / XCL-2) (Thiomicrospira crunogena) protein is NADPH-dependent 7-cyano-7-deazaguanine reductase.